We begin with the raw amino-acid sequence, 186 residues long: Intraflagellar transport protein 27 homolog (186 aa).

Residues 12-19 (GDPAVGKT), 64-68 (DSAGK), and 123-126 (TKTD) contribute to the GTP site.

Belongs to the small GTPase superfamily. Rab family. In terms of assembly, component of the IFT complex B, at least composed of IFT20, IFT22, IFT25, IFT27, IFT46, IFT52, TRAF3IP1/IFT54, IFT57, IFT74, IFT80, IFT81, and IFT88. Interacts with IFT25. Interacts with IFT70B. Interacts with RABL2/RABL2A; binding is equal in the presence of GTP or GDP. Interacts with IFT88. Interacts with ARL6; recognizes and binds with the GTP-free form of ARL6. Expressed predominantly in the testis (at protein level). Co-localizes with RABL2/RABL2A in the midpiece of elongated spermatids within the testis (at protein level).

The protein localises to the cell projection. The protein resides in the cilium. It is found in the cytoplasm. It localises to the flagellum. In terms of biological role, small GTPase-like component of the intraflagellar transport (IFT) complex B that promotes the exit of the BBSome complex from cilia via its interaction with ARL6. Not involved in entry of the BBSome complex into cilium. Prevents aggregation of GTP-free ARL6. Required for hedgehog signaling. Forms a subcomplex within the IFT complex B with IFT25. Its role in intraflagellar transport is mainly seen in tissues rich in ciliated cells such as kidney and testis. Essential for male fertility, spermiogenesis and sperm flagella formation. Plays a role in the early development of the kidney. May be involved in the regulation of ureteric bud initiation. The sequence is that of Intraflagellar transport protein 27 homolog (Ift27) from Mus musculus (Mouse).